The chain runs to 876 residues: Alanine--tRNA ligase (876 aa).

Lys74 is modified (N6-acetyllysine). Zn(2+)-binding residues include His564, His568, Cys666, and His670.

This sequence belongs to the class-II aminoacyl-tRNA synthetase family. In terms of assembly, homotetramer. Requires Zn(2+) as cofactor.

It is found in the cytoplasm. It catalyses the reaction tRNA(Ala) + L-alanine + ATP = L-alanyl-tRNA(Ala) + AMP + diphosphate. In terms of biological role, catalyzes the attachment of alanine to tRNA(Ala) in a two-step reaction: alanine is first activated by ATP to form Ala-AMP and then transferred to the acceptor end of tRNA(Ala). Also edits incorrectly charged Ser-tRNA(Ala) and Gly-tRNA(Ala) via its editing domain. The sequence is that of Alanine--tRNA ligase from Escherichia coli (strain SMS-3-5 / SECEC).